We begin with the raw amino-acid sequence, 625 residues long: Baeyer-Villiger monooxygenase ATR8 (625 aa).

Residues D112, 120–123, D132, and Y138 each bind FAD; that span reads TWYW. Residue 130–132 coordinates NADP(+); the sequence is QCD. NADP(+) contacts are provided by residues 266 to 272, 289 to 290, and 405 to 406; these read TGATAIQ, RT, and KR.

The protein belongs to the FAD-binding monooxygenase family. The cofactor is FAD.

Its pathway is mycotoxin biosynthesis. Baeyer-Villiger monooxygenase; part of the core atranone cluster (CAC) which products are predicted to catalyze most or all steps of mycotoxin atranone synthesis, starting from geranylgeranyl pyrophosphate (GGPP). The initial cyclization of GGPP to dolabellane is probably performed by the terpene cyclase ATR13. The Baeyer-Villiger oxidation near the end of the atranone synthesis, which converts atranones D and E to atranones F and G is predicted to be catalyzed by the monooxygenase ATR8. Of the CAC's other predicted gene products, the reducing PKS ATR6 might synthesize a polyketide chain. This polyketide is probably transferred onto the atranone backbone by the polyketide transferase ATR5. Other predicted CAC products include 4 oxygenases (ATR2, ATR3, ATR4, and ATR14), 3 short-chain reductases (ATR7, ATR9, and ATR10), and a methyltransferase (ATR12). These may all be involved in the various steps of atranone biosynthesis, although their specific roles must await experimental determination. This Stachybotrys chlorohalonatus (strain IBT 40285) protein is Baeyer-Villiger monooxygenase ATR8.